Reading from the N-terminus, the 217-residue chain is Large ribosomal subunit protein uL3 (217 aa).

The segment at 137–160 (VSASHGSHRNHRKPGSIGASSTPS) is disordered.

The protein belongs to the universal ribosomal protein uL3 family. As to quaternary structure, part of the 50S ribosomal subunit. Forms a cluster with proteins L14 and L19.

Its function is as follows. One of the primary rRNA binding proteins, it binds directly near the 3'-end of the 23S rRNA, where it nucleates assembly of the 50S subunit. This is Large ribosomal subunit protein uL3 from Clavibacter michiganensis subsp. michiganensis (strain NCPPB 382).